A 324-amino-acid polypeptide reads, in one-letter code: Aspartate carbamoyltransferase catalytic subunit (324 aa).

Carbamoyl phosphate contacts are provided by Arg-65 and Thr-66. Residue Lys-93 participates in L-aspartate binding. Carbamoyl phosphate-binding residues include Arg-115, His-145, and Gln-148. Positions 178 and 233 each coordinate L-aspartate. 2 residues coordinate carbamoyl phosphate: Gly-274 and Pro-275.

Belongs to the aspartate/ornithine carbamoyltransferase superfamily. ATCase family. In terms of assembly, heterododecamer (2C3:3R2) of six catalytic PyrB chains organized as two trimers (C3), and six regulatory PyrI chains organized as three dimers (R2).

The catalysed reaction is carbamoyl phosphate + L-aspartate = N-carbamoyl-L-aspartate + phosphate + H(+). Its pathway is pyrimidine metabolism; UMP biosynthesis via de novo pathway; (S)-dihydroorotate from bicarbonate: step 2/3. In terms of biological role, catalyzes the condensation of carbamoyl phosphate and aspartate to form carbamoyl aspartate and inorganic phosphate, the committed step in the de novo pyrimidine nucleotide biosynthesis pathway. The chain is Aspartate carbamoyltransferase catalytic subunit from Nitrosococcus oceani (strain ATCC 19707 / BCRC 17464 / JCM 30415 / NCIMB 11848 / C-107).